A 221-amino-acid polypeptide reads, in one-letter code: UPF0758 protein NTHI1125 (221 aa).

Positions 98-221 (PIINDLETVK…CYSFAENCLL (124 aa)) constitute an MPN domain. Positions 170, 172, and 183 each coordinate Zn(2+). Positions 170 to 183 (HNHPSGITEPSYSD) match the JAMM motif motif.

This sequence belongs to the UPF0758 family.

This chain is UPF0758 protein NTHI1125, found in Haemophilus influenzae (strain 86-028NP).